The chain runs to 183 residues: Non-specific lipid transfer protein GPI-anchored 15 (183 aa).

An N-terminal signal peptide occupies residues 1–24; the sequence is MGYRRSYAITFVALVAALWSVTKA. 4 disulfides stabilise this stretch: cysteine 30-cysteine 71, cysteine 40-cysteine 55, cysteine 56-cysteine 97, and cysteine 69-cysteine 107. Residues asparagine 47 and asparagine 86 are each glycosylated (N-linked (GlcNAc...) asparagine). A disordered region spans residues 108–158; the sequence is NAATGPTAQPPAPSPTEKTPDVTLTPTSLPGARSGVGGGSKTVPSVGTGSS. The span at 149–158 shows a compositional bias: polar residues; sequence TVPSVGTGSS. Serine 158 is lipidated: GPI-anchor amidated serine. The propeptide at 159–183 is removed in mature form; the sequence is SRNVDPLPLHFLMFAVLVVCTSSFL.

This sequence belongs to the plant LTP family. As to expression, expressed in seedlings, preferentially in the endodermis of hypocotyls and roots. Also observed in siliques.

The protein resides in the cell membrane. Functionally, probable lipid transfer protein. The protein is Non-specific lipid transfer protein GPI-anchored 15 of Arabidopsis thaliana (Mouse-ear cress).